Here is a 360-residue protein sequence, read N- to C-terminus: Putative F-box protein At3g16210 (360 aa).

Residues 1-48 (MSKFLPEELAIEILVRLSMKDLARFRCVCKTWRDLINDPGFTETYRDM) form the F-box domain.

In Arabidopsis thaliana (Mouse-ear cress), this protein is Putative F-box protein At3g16210.